Reading from the N-terminus, the 77-residue chain is Translation initiation factor IF-1, chloroplastic (77 aa).

The S1-like domain maps to 1 to 71 (MKEQKLIHEG…TRGRIIYRLR (71 aa)).

It belongs to the IF-1 family. As to quaternary structure, component of the 30S ribosomal translation pre-initiation complex which assembles on the 30S ribosome in the order IF-2 and IF-3, IF-1 and N-formylmethionyl-tRNA(fMet); mRNA recruitment can occur at any time during PIC assembly.

It is found in the plastid. Its subcellular location is the chloroplast. Functionally, one of the essential components for the initiation of protein synthesis. Stabilizes the binding of IF-2 and IF-3 on the 30S subunit to which N-formylmethionyl-tRNA(fMet) subsequently binds. Helps modulate mRNA selection, yielding the 30S pre-initiation complex (PIC). Upon addition of the 50S ribosomal subunit IF-1, IF-2 and IF-3 are released leaving the mature 70S translation initiation complex. This chain is Translation initiation factor IF-1, chloroplastic, found in Phalaenopsis aphrodite subsp. formosana (Moth orchid).